The sequence spans 101 residues: Ribonuclease kappa-A (101 aa).

The next 2 helical transmembrane spans lie at 13–33 and 68–88; these read ACGI…GVFF and VSYN…FSFC.

Belongs to the RNase K family.

The protein resides in the membrane. Functionally, endoribonuclease which preferentially cleaves ApU and ApG phosphodiester bonds. This chain is Ribonuclease kappa-A (rnasek-a), found in Xenopus laevis (African clawed frog).